The following is a 617-amino-acid chain: Protelomerase (617 aa).

The DNA site is built by R270, K295, R376, and H409. Y418 (nucleophile) is an active-site residue. A compositionally biased stretch (acidic residues) spans 535–562; sequence DAEEDEIEEDFTDEEIDDTEFDVSDNAS. The tract at residues 535 to 575 is disordered; that stretch reads DAEEDEIEEDFTDEEIDDTEFDVSDNASDEDKPEDKPRFAA. Residues 563-575 are compositionally biased toward basic and acidic residues; sequence DEDKPEDKPRFAA.

This sequence belongs to the Caudoviricetes Protelomerase family. In terms of assembly, monomer. Homodimer; in presence of DNA.

Converts the circular intermediates produced by the viral replication and carrying a joined telomere site to a linear DNA molecule with covalently closed hairpin ends. The viral circular DNA is cleaved at a palindromic site called telRL thereby generating a linear prophage plasmid with telomeres. Binds covalently to the 3'-phosphoryl of the cleaved strands. The protein is Protelomerase (tel) of Yersinia enterocolitica (Bacteriophage PY54).